The sequence spans 264 residues: MLDKKMSIATLKAKKGIEKITAITAYDALMARIFDGEVDVILVGDSLKMSFGGENETLGASMQEMIYHTKAVCKGAKHSFIIADMPFGSYATPNMALKNALRFYKNTAADALKLEVGIDKLPVVKVLCEEGIAVMAHIGLKPQFMRFDGGFKIKGKDEVESQELIEAAVAFQEAGVFGILIEGVKSESGARITQALEIPTIGIGAGVECDGQILVWSDAFGFFDEFKPKFVRRYCDGKAILKDAIRAYAKDVKSQAFPQAQESY.

Mg(2+) is bound by residues aspartate 45 and aspartate 84. 3-methyl-2-oxobutanoate contacts are provided by residues aspartate 45–serine 46, aspartate 84, and lysine 113. Glutamate 115 lines the Mg(2+) pocket. Residue glutamate 182 is the Proton acceptor of the active site.

Belongs to the PanB family. Homodecamer; pentamer of dimers. It depends on Mg(2+) as a cofactor.

The protein localises to the cytoplasm. The catalysed reaction is 3-methyl-2-oxobutanoate + (6R)-5,10-methylene-5,6,7,8-tetrahydrofolate + H2O = 2-dehydropantoate + (6S)-5,6,7,8-tetrahydrofolate. It participates in cofactor biosynthesis; (R)-pantothenate biosynthesis; (R)-pantoate from 3-methyl-2-oxobutanoate: step 1/2. Catalyzes the reversible reaction in which hydroxymethyl group from 5,10-methylenetetrahydrofolate is transferred onto alpha-ketoisovalerate to form ketopantoate. The polypeptide is 3-methyl-2-oxobutanoate hydroxymethyltransferase (Helicobacter hepaticus (strain ATCC 51449 / 3B1)).